A 109-amino-acid polypeptide reads, in one-letter code: ATPase inhibitor mai-2, mitochondrial (109 aa).

Disordered regions lie at residues 17–39 (RFSTGGHGDGAGRGGGSGGSIRD) and 73–95 (QEVDHHKSQLENHQKVLDRHQKR). Over residues 21–35 (GGHGDGAGRGGGSGG) the composition is skewed to gly residues. Residues 45-109 (GKMEAAREDE…EAEERALGKE (65 aa)) adopt a coiled-coil conformation.

Belongs to the ATPase inhibitor family.

It localises to the mitochondrion. Functionally, thought to be a regulatory component of the ATP-synthesizing complex in the mitochondria. In Caenorhabditis briggsae, this protein is ATPase inhibitor mai-2, mitochondrial.